A 163-amino-acid chain; its full sequence is Beta-lactoglobulin-2 (163 aa).

Disulfide bonds link cysteine 66–cysteine 161 and cysteine 106–cysteine 120.

The protein belongs to the calycin superfamily. Lipocalin family. Monomer.

Its subcellular location is the secreted. Lactoglobulin is the primary component of whey, it binds retinol and is probably involved in the transport of that molecule. The sequence is that of Beta-lactoglobulin-2 (LGB2) from Felis catus (Cat).